Reading from the N-terminus, the 1366-residue chain is MSEVVEKADENVVPLFSRPELYPVPSESVLTVDLRDGTVRILKCTLPALLVQLSSPLDKVDYSMLTDFFLVYRNFMSSQKLLDLIQERFQWAIDLRQSDPSSQEKITSEVILVRMFVLVRHWLSNYFAQDFVVDTSLRRQFLQFINGYSPVDRFLDNIIISLKKLWVQNVQIMWEDLENLIVENNVVSRDDWLKWEIEDVPSGSSSETGEGSTKGKRLSFIALQNINNPVLRNESLLSLLHTREKIPLPQQSEDESKKQSTRIKQRTGSMLLFPENASNGLSINEKLTASGVSPEATPKQEREITDPKNSKDNKHILPQLSRVTNVSYMMKDLEYPSTPSVDIFVPPTPAKNIEFILQTSYMETDLPEQSNGSDSTNTVNGNNTNHKGILGLLSKWKLNHQRKPTVNPVQNPPRVENLIKYVFSISSLDNHANPLPDSLSSMFDILSARTIDEVEYLVSVESDLLAKLEAKKLTTEISKLETNEDESQDYSVIDNLNLYKTVSSIANSVISLSKTLNVRTNKSTTHLLSPSTSALERKNIRNSAPMLYSYNNSRYSITNALMGLPNTNDNSSPKRLVFHDPTRNSPTKKAILANNLNNIGEYNGERDSITSIVTYDSAFSDISSSGNILSQHKGSSNIFMESAPTLKRKLNVNDLRRFNFEKSDSTDDRSCSPQNREATETSATSMESDANDNAIQDEYENENEDIASLITAYEESTSEIDTQCQNNAQIRRPTSGRISITRNYSVASPNSLRSILPKSPLILGNEVFIERDKALAANQDIISELEETTSLLLNDNDRKFTVSRGSVCNDSDSQSISTNLLFSSAQASPQKLVIKEVDVIQEKSEHPDVPTPVLCKQPISKLSETPSIKSIGSRDSEESFDLTSIASKPNRAQSTTLREKYHLEKQATNDIFEEDVENLNPENNKYLFSPDTDSIDFASPEKNLDDLKQQFIDQSTDEQTSLDEEEIATQDNENKDHGIDKKKLEDIMNGIDDTADTSMDPVNLALMKLEGTYDKGEKEIDDKSPSINSELAREVENFQIVQTAALPESARKRQSMFIQRRRNTMIDFSVRDSLIDKDSSCTRLENTDEQIRNLLNQYTLTDSRLKIDNLEQHIPFILMYDSKSVANQLTLIEKEILSEVDWKDLLDLTMSEQLPQFTSWLQLLVQNENLSGIDLAIARFNLTVDWIISEIVMTQDIRLRRNTIQRFIHIAEHCKELQNYNTLMEIILALNSIVVQKFTETWRLVEPGDLLTWETLKAIPSLEKNYSNIRQLIDEVEPLSGCIPFIVVYLSDLSLNIEKRTWIVHDEVLNYNKFQTNVQIVKNFVQKMQWSKFYNIDIDHELLSKCVYITSLSHDEINSISHKSPI.

One can recognise an N-terminal Ras-GEF domain in the interval 37–170 (GTVRILKCTL…SLKKLWVQNV (134 aa)). 3 disordered regions span residues 290-314 (SGVS…KDNK), 661-690 (EKSD…ESDA), and 955-979 (STDE…DHGI). Basic and acidic residues-rich tracts occupy residues 298-314 (PKQE…KDNK) and 661-670 (EKSDSTDDRS). Polar residues predominate over residues 671–690 (CSPQNREATETSATSMESDA). Residues 1121–1361 (DSKSVANQLT…LSHDEINSIS (241 aa)) form the Ras-GEF domain.

This sequence belongs to the LTE1 family.

It localises to the cytoplasm. Its subcellular location is the bud. In terms of biological role, GDP-GTP exchange factor component of the mitotic exit network (MEN). Fine-tunes the timing of the mitotic exit and couples this event with cytokinesis. May also be involved in proprotein-processing in the secretory pathway. The chain is Guanine nucleotide exchange factor LTE1 (LTE1) from Kluyveromyces lactis (strain ATCC 8585 / CBS 2359 / DSM 70799 / NBRC 1267 / NRRL Y-1140 / WM37) (Yeast).